Reading from the N-terminus, the 679-residue chain is uncharacterized protein (679 aa).

Transmembrane regions (helical) follow at residues 23–41 (YALR…AYYL), 46–65 (PYWA…GGVI), 72–90 (IAGS…GHTL), 94–113 (WLFL…ACAH), 120–142 (YAFQ…IVEI), 157–179 (IVGI…GTAL), 362–381 (WSGV…SIGA), 385–404 (SGPG…SIVA), 411–433 (SLLM…GLMV), 438–455 (LWQF…MQLL), 462–481 (LAGL…AVTN), and 496–515 (AKIV…RPGS).

This sequence belongs to the aromatic acid exporter ArAE (TC 2.A.85) family.

It is found in the cell membrane. This is an uncharacterized protein from Salmonella typhimurium (strain LT2 / SGSC1412 / ATCC 700720).